The primary structure comprises 296 residues: Homoserine kinase (296 aa).

Residue 84 to 94 (PLARGLGSSSS) coordinates ATP.

It belongs to the GHMP kinase family. Homoserine kinase subfamily.

The protein resides in the cytoplasm. It catalyses the reaction L-homoserine + ATP = O-phospho-L-homoserine + ADP + H(+). Its pathway is amino-acid biosynthesis; L-threonine biosynthesis; L-threonine from L-aspartate: step 4/5. Catalyzes the ATP-dependent phosphorylation of L-homoserine to L-homoserine phosphate. In Lactococcus lactis subsp. cremoris (Streptococcus cremoris), this protein is Homoserine kinase (thrB).